Here is a 254-residue protein sequence, read N- to C-terminus: Diphthine synthase (254 aa).

Residues Asp-83, Leu-86, 111–112 (SI), Leu-163, and Val-205 each bind S-adenosyl-L-methionine.

It belongs to the diphthine synthase family. Homodimer.

The enzyme catalyses 2-[(3S)-amino-3-carboxypropyl]-L-histidyl-[translation elongation factor 2] + 3 S-adenosyl-L-methionine = diphthine-[translation elongation factor 2] + 3 S-adenosyl-L-homocysteine + 3 H(+). Its pathway is protein modification; peptidyl-diphthamide biosynthesis. In terms of biological role, S-adenosyl-L-methionine-dependent methyltransferase that catalyzes the trimethylation of the amino group of the modified target histidine residue in translation elongation factor 2 (EF-2), to form an intermediate called diphthine. The three successive methylation reactions represent the second step of diphthamide biosynthesis. The polypeptide is Diphthine synthase (Pyrobaculum aerophilum (strain ATCC 51768 / DSM 7523 / JCM 9630 / CIP 104966 / NBRC 100827 / IM2)).